Reading from the N-terminus, the 24-residue chain is Pandinin-2 (24 aa).

Homooligomer. As to expression, expressed by the venom gland.

It localises to the secreted. It is found in the target cell membrane. Disrupts cell membranes through formation of pores. Has strong antimicrobial activity against Gram-positive bacteria B.subtilis, S.epidermidis, E.faecalis and S.aureus. Is less active against Gram-negative bacteria P.aeruginosa and E.coli. Also increases efficacy of antibiotics (ampicillin, chloramphenicol, streptomycin, kanamycin, novobiocin) when tested against E.coli, probably by facilitating their incorporation into the bacteria. Possesses antifungal activity against C.albicans and hemolytic activity against human, sheep and pig erythrocytes. The sequence is that of Pandinin-2 from Pandinus imperator (Emperor scorpion).